The following is a 474-amino-acid chain: Tubulin gamma-2 chain (474 aa).

Residue 142 to 148 coordinates GTP; sequence AGGTGSG.

This sequence belongs to the tubulin family. As to quaternary structure, gamma-tubulin complex is composed of gamma-tubulin and GCP proteins.

The protein resides in the cytoplasm. Its subcellular location is the cytoskeleton. It is found in the microtubule organizing center. It localises to the nucleus. The protein localises to the cell cortex. In terms of biological role, tubulin is the major constituent of microtubules. The gamma chain is found at microtubule organizing centers (MTOC) such as the spindle poles, suggesting that it is involved in the minus-end nucleation of microtubule assembly. Gamma-tubulin complex is essential for the control of microtubular network remodeling in the course of initiation and development of giant-feeding cells, and for the successful reproduction of nematodes (e.g. Meloidogyne spp.) in their plant hosts. This is Tubulin gamma-2 chain (TUBG2) from Arabidopsis thaliana (Mouse-ear cress).